The following is a 466-amino-acid chain: Gamma-aminobutyric acid receptor subunit gamma-2 (466 aa).

The N-terminal stretch at 1 to 38 (MSSPNTWSTGSTVYSPVFSQKMTLWILLLLSLYPGFTS) is a signal peptide. Residues 39-274 (QKSDDDYEDY…FDLSRRMGYF (236 aa)) are Extracellular-facing. Asn-51 and Asn-128 each carry an N-linked (GlcNAc...) asparagine glycan. Cys-189 and Cys-203 are joined by a disulfide. The N-linked (GlcNAc...) asparagine glycan is linked to Asn-246. Residues 275–295 (TIQTYIPCTLIVVLSWVSFWI) form a helical membrane-spanning segment. Over 296–301 (NKDAVP) the chain is Cytoplasmic. A helical transmembrane segment spans residues 302–321 (ARTSLGITTVLTMTTLSTIA). At 322–333 (RKSLPKVSYVTA) the chain is on the extracellular side. Residues 334-358 (MDLFVSVCFIFVFSALVEYGTLHYF) traverse the membrane as a helical segment. At 359-442 (VSNRKPSKDK…IHIRIAKMDS (84 aa)) the chain is on the cytoplasmic side. Residues 443–463 (YARIFFPTAFCLFNLVYWVSY) traverse the membrane as a helical segment. Over 464–466 (LYL) the chain is Extracellular.

Belongs to the ligand-gated ion channel (TC 1.A.9) family. Gamma-aminobutyric acid receptor (TC 1.A.9.5) subfamily. GABRG2 sub-subfamily. In terms of assembly, heteropentamer, formed by a combination of alpha (GABRA1-6), beta (GABRB1-3), gamma (GABRG1-3), delta (GABRD), epsilon (GABRE), rho (GABRR1-3), pi (GABRP) and theta (GABRQ) chains, each subunit exhibiting distinct physiological and pharmacological properties. Interacts with GABARAP. Interacts with KIF21B. Identified in a complex of 720 kDa composed of LHFPL4, NLGN2, GABRA1, GABRB2, GABRG2 and GABRB3. Interacts with LHFPL4. Interacts with SHISA7; interaction leads to the regulation of GABA(A) receptor trafficking, channel deactivation kinetics and pharmacology. Post-translationally, palmitoylated by ZDHHC3/GODZ; required for the accumulation of GABA(A) receptors at the postsynaptic membrane of inhibitory GABAergic synapses. In terms of processing, glycosylated. As to expression, expressed in brain (at protein level). Expressed in lungs, in alveolar epithelium.

It is found in the postsynaptic cell membrane. It localises to the cell membrane. The protein localises to the cell projection. The protein resides in the dendrite. Its subcellular location is the cytoplasmic vesicle membrane. It catalyses the reaction chloride(in) = chloride(out). With respect to regulation, allosterically activated by benzodiazepines. Activated by pentobarbital. Inhibited by the antagonist bicuculline. Inhibited by zinc ions. Potentiated by histamine. Its function is as follows. Gamma subunit of the heteropentameric ligand-gated chloride channel gated by gamma-aminobutyric acid (GABA), a major inhibitory neurotransmitter in the brain. GABA-gated chloride channels, also named GABA(A) receptors (GABAAR), consist of five subunits arranged around a central pore and contain GABA active binding site(s) located at the alpha and beta subunit interface(s). When activated by GABA, GABAARs selectively allow the flow of chloride anions across the cell membrane down their electrochemical gradient. Gamma-2/GABRG2-containing GABAARs are found at both synaptic and extrasynaptic sites. Chloride influx into the postsynaptic neuron following GABAAR opening decreases the neuron ability to generate a new action potential, thereby reducing nerve transmission. GABAARs containing alpha-1 and beta-2 or -3 subunits exhibit synaptogenic activity; the gamma-2 subunit being necessary but not sufficient to induce rapid synaptic contacts formation. Extrasynaptic gamma-2-containing receptors contribute to the tonic GABAergic inhibition. GABAARs function also as histamine receptor where histamine binds at the interface of two neighboring beta subunits and potentiates GABA response in a gamma-2 subunit-controlled manner. The protein is Gamma-aminobutyric acid receptor subunit gamma-2 of Rattus norvegicus (Rat).